The following is a 281-amino-acid chain: Bifunctional protein FolD (281 aa).

NADP(+) contacts are provided by residues 161 to 163 (GRS), Ser-186, and Ile-227.

The protein belongs to the tetrahydrofolate dehydrogenase/cyclohydrolase family. Homodimer.

It carries out the reaction (6R)-5,10-methylene-5,6,7,8-tetrahydrofolate + NADP(+) = (6R)-5,10-methenyltetrahydrofolate + NADPH. The catalysed reaction is (6R)-5,10-methenyltetrahydrofolate + H2O = (6R)-10-formyltetrahydrofolate + H(+). The protein operates within one-carbon metabolism; tetrahydrofolate interconversion. Functionally, catalyzes the oxidation of 5,10-methylenetetrahydrofolate to 5,10-methenyltetrahydrofolate and then the hydrolysis of 5,10-methenyltetrahydrofolate to 10-formyltetrahydrofolate. The protein is Bifunctional protein FolD of Brachyspira hyodysenteriae (strain ATCC 49526 / WA1).